A 292-amino-acid polypeptide reads, in one-letter code: Bifunctional protein FolD (292 aa).

NADP(+)-binding positions include 169–171 (GRS) and S194.

Belongs to the tetrahydrofolate dehydrogenase/cyclohydrolase family. As to quaternary structure, homodimer.

The catalysed reaction is (6R)-5,10-methylene-5,6,7,8-tetrahydrofolate + NADP(+) = (6R)-5,10-methenyltetrahydrofolate + NADPH. It carries out the reaction (6R)-5,10-methenyltetrahydrofolate + H2O = (6R)-10-formyltetrahydrofolate + H(+). It participates in one-carbon metabolism; tetrahydrofolate interconversion. Catalyzes the oxidation of 5,10-methylenetetrahydrofolate to 5,10-methenyltetrahydrofolate and then the hydrolysis of 5,10-methenyltetrahydrofolate to 10-formyltetrahydrofolate. This is Bifunctional protein FolD from Nostoc punctiforme (strain ATCC 29133 / PCC 73102).